Here is a 120-residue protein sequence, read N- to C-terminus: Protein CcdB (120 aa).

In terms of domain architecture, Response regulatory spans 3 to 118 (RVLVVDDAKF…KVLEAVSRVM (116 aa)). 4-aspartylphosphate is present on Asp-53.

The chain is Protein CcdB (ccdB) from Bacillus subtilis (strain 168).